Consider the following 142-residue polypeptide: MASKLLLEIVTPDRKVLSQEVDYVGAPGIEGEFGIMANHIPFLSALGVGNLYFKEGNRTHYIFVSGGFAEVGNNKVTILAEVAEKAVEIDIARAQKAQEKAKARLAKAQDRIESARAQAALQRALARLTCKDAAQKAGTTTH.

Belongs to the ATPase epsilon chain family. As to quaternary structure, F-type ATPases have 2 components, CF(1) - the catalytic core - and CF(0) - the membrane proton channel. CF(1) has five subunits: alpha(3), beta(3), gamma(1), delta(1), epsilon(1). CF(0) has three main subunits: a, b and c.

It localises to the cell inner membrane. Functionally, produces ATP from ADP in the presence of a proton gradient across the membrane. The protein is ATP synthase epsilon chain of Maridesulfovibrio salexigens (strain ATCC 14822 / DSM 2638 / NCIMB 8403 / VKM B-1763) (Desulfovibrio salexigens).